The following is a 69-amino-acid chain: DNA gyrase inhibitor YacG (69 aa).

Residues 1–15 show a composition bias toward basic and acidic residues; sequence MSDEPEHTAKVEPLR. The segment at 1–22 is disordered; that stretch reads MSDEPEHTAKVEPLRKPLPCPE. 4 residues coordinate Zn(2+): cysteine 20, cysteine 23, cysteine 35, and cysteine 39.

Belongs to the DNA gyrase inhibitor YacG family. As to quaternary structure, interacts with GyrB. The cofactor is Zn(2+).

Functionally, inhibits all the catalytic activities of DNA gyrase by preventing its interaction with DNA. Acts by binding directly to the C-terminal domain of GyrB, which probably disrupts DNA binding by the gyrase. This Allorhizobium ampelinum (strain ATCC BAA-846 / DSM 112012 / S4) (Agrobacterium vitis (strain S4)) protein is DNA gyrase inhibitor YacG.